A 345-amino-acid chain; its full sequence is Dihydroorotase (345 aa).

Zn(2+) is bound by residues H13 and H15. Substrate is bound by residues 15 to 17 (HLR) and N41. The Zn(2+) site is built by K99, H136, H174, and D247. K99 is modified (N6-carboxylysine). H136 contributes to the substrate binding site. D247 is a catalytic residue. Substrate is bound by residues H251 and A263.

The protein belongs to the metallo-dependent hydrolases superfamily. DHOase family. Class II DHOase subfamily. In terms of assembly, homodimer. It depends on Zn(2+) as a cofactor.

It carries out the reaction (S)-dihydroorotate + H2O = N-carbamoyl-L-aspartate + H(+). It functions in the pathway pyrimidine metabolism; UMP biosynthesis via de novo pathway; (S)-dihydroorotate from bicarbonate: step 3/3. In terms of biological role, catalyzes the reversible cyclization of carbamoyl aspartate to dihydroorotate. The chain is Dihydroorotase from Halorhodospira halophila (strain DSM 244 / SL1) (Ectothiorhodospira halophila (strain DSM 244 / SL1)).